The primary structure comprises 844 residues: Proto-oncogene vav (844 aa).

The Calponin-homology (CH) domain maps to 1 to 119; sequence MELWRQCTHW…YTLSALSWTP (119 aa). The DH domain maps to 193 to 372; it reads KRCCCLREIQ…RDLAQCVNEV (180 aa). The PH domain occupies 401-503; that stretch reads RPKIDGELKI…WMEQFEMAIS (103 aa). The Phorbol-ester/DAG-type zinc finger occupies 514 to 563; it reads GHDFQMFSFEETTSCKACQMLLRGTFYQGYRCQRCRAPAHKECLGRVPPC. The tract at residues 567-589 is disordered; it reads GQDYSGTMKKDKPHRRAQDKKRN. Positions 591-659 constitute an SH3 1 domain; it reads LGLPKMEVCQ…PCNRVKPYVH (69 aa). One can recognise an SH2 domain in the interval 670-764; that stretch reads WYAGPMERAG…SLDTTLQFPF (95 aa). An SH3 2 domain is found at 781 to 841; it reads KIFGTAKARY…PSNYVEEDYS (61 aa). Residues Tyr825 and Tyr843 each carry the phosphotyrosine modification.

Interacts with SHB. Interacts with APS, DOCK2, GRB2, GRB3, DOCK2, SLA, TEC and ZNF655/VIK. Interacts with SIAH2; without leading to its degradation. Associates with BLNK, PLCG1, GRB2 and NCK1 in a B-cell antigen receptor-dependent fashion. Interacts with CBLB; which inhibits tyrosine phosphorylation and down-regulates activity. May interact with CCPG1. Interacts with CLNK. Interacts with THEMIS2. Interacts with NEK3 and this interaction is prolactin-dependent. Interacts with ITK. Interacts with PTK2B/PYK2. Interacts with HCK. Interacts with PTK2B/PYK2. Interacts (via SH2 domain) with SYK. Interacts with ANKRD54. Interacts with CD6. Interacts with LCP2; this interaction plays a role in TCR-mediated cytokine production. Phosphorylated by FYN. Phosphorylated on tyrosine residues by HCK in response to IFNG and bacterial lipopolysaccharide (LPS).

Couples tyrosine kinase signals with the activation of the Rho/Rac GTPases, thus leading to cell differentiation and/or proliferation. The sequence is that of Proto-oncogene vav (VAV1) from Bos taurus (Bovine).